Consider the following 151-residue polypeptide: Sec-independent protein translocase protein TatB (151 aa).

Residues 1 to 21 (MFDVSFTELMVIGVIALVVIG) form a helical membrane-spanning segment. Residues 66 to 151 (MDETARSMQT…DKTPPTGSAT (86 aa)) are disordered. Residues 93–103 (AELDDTARDAS) show a composition bias toward basic and acidic residues. Composition is skewed to low complexity over residues 109-122 (ADAP…VASD) and 133-151 (APPA…GSAT).

Belongs to the TatB family. In terms of assembly, the Tat system comprises two distinct complexes: a TatABC complex, containing multiple copies of TatA, TatB and TatC subunits, and a separate TatA complex, containing only TatA subunits. Substrates initially bind to the TatABC complex, which probably triggers association of the separate TatA complex to form the active translocon.

The protein localises to the cell inner membrane. Its function is as follows. Part of the twin-arginine translocation (Tat) system that transports large folded proteins containing a characteristic twin-arginine motif in their signal peptide across membranes. Together with TatC, TatB is part of a receptor directly interacting with Tat signal peptides. TatB may form an oligomeric binding site that transiently accommodates folded Tat precursor proteins before their translocation. This Bordetella parapertussis (strain 12822 / ATCC BAA-587 / NCTC 13253) protein is Sec-independent protein translocase protein TatB.